The sequence spans 322 residues: tRNA dimethylallyltransferase (322 aa).

Residue 21-28 (GQTAVGKT) coordinates ATP. 23–28 (TAVGKT) contacts substrate. The tract at residues 46–49 (DSGC) is interaction with substrate tRNA.

Belongs to the IPP transferase family. Monomer. Mg(2+) is required as a cofactor.

The catalysed reaction is adenosine(37) in tRNA + dimethylallyl diphosphate = N(6)-dimethylallyladenosine(37) in tRNA + diphosphate. Functionally, catalyzes the transfer of a dimethylallyl group onto the adenine at position 37 in tRNAs that read codons beginning with uridine, leading to the formation of N6-(dimethylallyl)adenosine (i(6)A). The sequence is that of tRNA dimethylallyltransferase from Wigglesworthia glossinidia brevipalpis.